The sequence spans 495 residues: Tubulin epsilon and delta complex protein 1 (495 aa).

Residues 355-387 (GGELDLVVRELQALEEELREAAERRRAAWEAKA) are a coiled coil. The segment at 417–440 (CWERDGGPAQPHGPHRLVRREDGA) is disordered. Residues 452 to 480 (IRTLRSQEACLEAVLRRLQGQCRQELARL) adopt a coiled-coil conformation.

Interacts with TEDC2. Found in a complex with TEDC1, TEDC2, TUBE1 and TUBD1.

The protein localises to the cell projection. It localises to the cilium. Its subcellular location is the cytoplasm. It is found in the cytoskeleton. The protein resides in the microtubule organizing center. The protein localises to the centrosome. It localises to the centriole. Functionally, acts as a positive regulator of ciliary hedgehog signaling. Required for centriole stability. May play a role in counteracting perturbation of actin filaments, such as after treatment with the actin depolymerizing microbial metabolite Chivosazole F. This chain is Tubulin epsilon and delta complex protein 1, found in Homo sapiens (Human).